The primary structure comprises 438 residues: MYIIADWRRTHYSEQVIPEMDGQEVILMGWVHSIRALGKLAFIILRDREGLIQMVVPKQKVDEETFELAKKLGKEDVITIRGKVVANEKAPKGFEVIPMEIRILNKADAPLPLDPSEKVPAEIDTRLDRRFLDIRRPKIQAIFKIRSEMLKSIRKTFSEEGFIEVNTPKLVASATEGGTELFPISYFEKEAFLGQSPQLYKQMMMAGGFDKVFEIAQIFRAEEHNTRRHLNEAISIDTEMSFVNEKDAMAMLEKVVHNCYTDIEYNRPSEIETLELNFEIPEKTFPKVTYSEAVDVAVSKGVEIEWGEDLSRAAEKAIGDEMGGLYFITEWPTQTRPFYTLPDENDNKICKAFDLMYKELEISSGAQRIHKYDSLVQNIAKRGMNPDSFETYLEAFRYGMPPHAGWGLGADRFTMILTNQENIRECVLFPRDRQRLTP.

Glu-176 contributes to the L-aspartate binding site. Positions 198-201 (QLYK) are aspartate. Arg-220 serves as a coordination point for L-aspartate. ATP-binding positions include 220–222 (RAE), 228–230 (RHL), and Glu-361. The Mg(2+) site is built by Glu-361 and Ser-364. L-aspartate-binding residues include Ser-364 and Arg-368. 409-412 (GADR) contacts ATP.

This sequence belongs to the class-II aminoacyl-tRNA synthetase family. Type 2 subfamily. In terms of assembly, homodimer. Mg(2+) is required as a cofactor.

It localises to the cytoplasm. It catalyses the reaction tRNA(Asx) + L-aspartate + ATP = L-aspartyl-tRNA(Asx) + AMP + diphosphate. Its function is as follows. Aspartyl-tRNA synthetase with relaxed tRNA specificity since it is able to aspartylate not only its cognate tRNA(Asp) but also tRNA(Asn). Reaction proceeds in two steps: L-aspartate is first activated by ATP to form Asp-AMP and then transferred to the acceptor end of tRNA(Asp/Asn). The sequence is that of Aspartate--tRNA(Asp/Asn) ligase from Methanococcus vannielii (strain ATCC 35089 / DSM 1224 / JCM 13029 / OCM 148 / SB).